The chain runs to 171 residues: AN1-type zinc finger protein 2A (171 aa).

2 consecutive AN1-type zinc fingers follow at residues 4–52 and 94–142; these read PDLG…KKDV and KVFT…SSAS. Positions 10, 15, 25, 28, 33, 36, 42, 44, 100, 105, 115, 118, 123, 126, 132, and 134 each coordinate Zn(2+). Positions 134 to 171 are disordered; that stretch reads CQAGSSSASRGRTSTSRAAEQKPSGVSWLAQRLRRTVK. Positions 136 to 151 are enriched in low complexity; that stretch reads AGSSSASRGRTSTSRA.

The protein resides in the cytoplasm. It localises to the nucleus. In Mus musculus (Mouse), this protein is AN1-type zinc finger protein 2A (Zfand2a).